The primary structure comprises 256 residues: Phosphonates import ATP-binding protein PhnC (256 aa).

The ABC transporter domain occupies 3 to 247 (LELKNISKTY…VLHKEIFTNV (245 aa)). Position 36-43 (36-43 (GLSGAGKS)) interacts with ATP.

This sequence belongs to the ABC transporter superfamily. Phosphonates importer (TC 3.A.1.9.1) family. As to quaternary structure, the complex is composed of two ATP-binding proteins (PhnC), two transmembrane proteins (PhnE) and a solute-binding protein (PhnD).

It is found in the cell inner membrane. It catalyses the reaction phosphonate(out) + ATP + H2O = phosphonate(in) + ADP + phosphate + H(+). In terms of biological role, part of the ABC transporter complex PhnCDE involved in phosphonates import. Responsible for energy coupling to the transport system. This is Phosphonates import ATP-binding protein PhnC from Treponema denticola (strain ATCC 35405 / DSM 14222 / CIP 103919 / JCM 8153 / KCTC 15104).